The primary structure comprises 395 residues: Na(+)/H(+) antiporter NhaA (395 aa).

Helical transmembrane passes span 18–38 (AGGI…NSPL), 64–84 (LLMW…GLEV), 100–120 (IFPA…YWLV), 129–149 (GGWA…LVLL), 160–180 (FLLA…ALFF), 182–202 (HDLS…LILL), 205–225 (FKVS…VSVL), 226–246 (KSGV…PLKG), 266–286 (FLIL…GLGM), 295–315 (LGVT…FSYL), 333–353 (IFAV…LASL), and 368–388 (LGIL…LFVT).

Belongs to the NhaA Na(+)/H(+) (TC 2.A.33) antiporter family.

The protein localises to the cell inner membrane. It carries out the reaction Na(+)(in) + 2 H(+)(out) = Na(+)(out) + 2 H(+)(in). Its function is as follows. Na(+)/H(+) antiporter that extrudes sodium in exchange for external protons. The sequence is that of Na(+)/H(+) antiporter NhaA from Histophilus somni (strain 129Pt) (Haemophilus somnus).